Reading from the N-terminus, the 60-residue chain is Acidic phospholipase A2 (60 aa).

Ca(2+) is bound by residues Y27, G29, and G31. A disulfide bridge links C28 with C44. H47 is a catalytic residue. D48 contacts Ca(2+).

Belongs to the phospholipase A2 family. Group II subfamily. D49 sub-subfamily. As to quaternary structure, monomer. It depends on Ca(2+) as a cofactor. In terms of tissue distribution, expressed by the venom gland.

It localises to the secreted. It carries out the reaction a 1,2-diacyl-sn-glycero-3-phosphocholine + H2O = a 1-acyl-sn-glycero-3-phosphocholine + a fatty acid + H(+). Functionally, snake venom phospholipase A2 (PLA2) that exhibits an indirect hemolytic activity, a low myotoxicity, and induces edema. In addition, this enzyme has been shown to induce the release of some pro- and anti-inflammatory cytokines from human PBMC (IL12B, TNF-alpha, IL1B and IL6 but not variation has been observed for IL-8 and IL-10). PLA2 catalyzes the calcium-dependent hydrolysis of the 2-acyl groups in 3-sn-phosphoglycerides. This is Acidic phospholipase A2 from Bothrops leucurus (Whitetail lancehead).